An 82-amino-acid chain; its full sequence is Small ribosomal subunit protein uS17 (82 aa).

This sequence belongs to the universal ribosomal protein uS17 family. In terms of assembly, part of the 30S ribosomal subunit.

Its function is as follows. One of the primary rRNA binding proteins, it binds specifically to the 5'-end of 16S ribosomal RNA. The polypeptide is Small ribosomal subunit protein uS17 (Ehrlichia ruminantium (strain Gardel)).